The sequence spans 432 residues: Cyclic GMP-AMP synthase (432 aa).

110–115 (QGSFQY) is a GTP binding site. Asp129 and Asp131 together coordinate Mg(2+). An ATP-binding site is contributed by Arg180. Asp191 is a binding site for Mg(2+). Position 255 (Ser255) interacts with ATP. The GTP site is built by Lys283, Ser297, and Asp344. Gly432 participates in a covalent cross-link: Glycyl cysteine dithioester (Gly-Cys) (interchain with C-13 in Cap2). Gly432 is covalently cross-linked (Glycyl cysteine dithioester (Gly-Cys) (interchain with C-493 in Cap2)). Gly432 participates in a covalent cross-link: Glycyl cysteine dithioester (Gly-Cys) (interchain with C-513 in Cap2). Gly432 participates in a covalent cross-link: Glycyl lysine isopeptide (Gly-Lys) (interchain with K-? in acceptor proteins).

Belongs to the CD-NTase family. A02 subfamily. A Cap2 dimer is bound on either side by a DncV monomer. The cofactor is Mg(2+). Post-translationally, in bacteria expressing capV-dncV-cap2-cap3, this protein is conjugated to about 130 cellular proteins by Cap2, most of which are involved in metabolism; more conjugated protein is found in the absence of Cap3. Most conjugation occurs via an isopeptide bond with the epsilon-amine of Lys on the target protein, but Cys-conjugation also occurs, including to Cap2. Conjugation or deconjugation from cellular proteins does not change the DncV activity in vitro, but does so in vivo during infection. (Microbial infection) During phage T4 infection is conjugated to at least 2 T4 proteins (fibritin (wac) and dexA.2).

The enzyme catalyses GTP + ATP = 3',3'-cGAMP + 2 diphosphate. Primed for activation by Cap2 which conjugates it to cellular proteins. cGAMP production is induced in phage T4 infected cells in a manner that requires Cap2 and Cap3, as well as a C-terminal Ala or Gly residue in this protein. Functionally, cyclic nucleotide synthase (second messenger synthase) of a CBASS antivirus system. CBASS (cyclic oligonucleotide-based antiphage signaling system) provides immunity against bacteriophages. The CD-NTase protein (DncV, this protein) synthesizes cyclic nucleotides in response to infection; these serve as specific second messenger signals. The signals activate a diverse range of effectors, leading to bacterial cell death and thus abortive phage infection. A type II-A(GA) CBASS system. Its function is as follows. Catalyzes the synthesis of 3',3'-cyclic GMP-AMP (cGAMP) from GTP and ATP, a second messenger in cell signal transduction. Its product controls the activity of cGAMP-activated phospholipase CapV, a patatin-like lipase that is a direct cGAMP receptor encoded in the dncV operon. Protects E.coli against phage infection. When capV and dncV are introduced in E.coli MG1655 there is 1000-fold protection against phage P1; protection against other phage (T2, T4, T5, T6 and lambda-vir) requires the 2 subsequent genes (cap2 and cap3). In another paper the capV-dncV-cap2-cap3 operon gives 10(4)-10(5)-fold protection against phages lambda, T2, T4 and T6, about 1000-fold protection against P1 and 10-fold protection against T5. The chain is Cyclic GMP-AMP synthase from Escherichia coli (strain TW11681).